The primary structure comprises 734 residues: Photosystem I P700 chlorophyll a apoprotein A2 (734 aa).

8 helical membrane passes run 46 to 69, 135 to 158, 175 to 199, 273 to 291, 330 to 353, 369 to 395, 417 to 439, and 517 to 535; these read IFAS…FHVA, LYNG…LHLE, LNHH…HVAI, IAHH…GHMY, LHFQ…QHMY, AALY…IFFI, AIIS…LYVH, and FLVH…LILV. Cys-559 and Cys-568 together coordinate [4Fe-4S] cluster. Helical transmembrane passes span 575-596 and 643-665; these read AFYL…YWHW and LAVW…MFLI. Residues His-654, Met-662, and Tyr-670 each contribute to the chlorophyll a site. A phylloquinone-binding site is contributed by Trp-671. A helical transmembrane segment spans residues 707-727; sequence LVGLAHFSVGYVFTYAAFLIA.

This sequence belongs to the PsaA/PsaB family. The PsaA/B heterodimer binds the P700 chlorophyll special pair and subsequent electron acceptors. PSI consists of a core antenna complex that captures photons, and an electron transfer chain that converts photonic excitation into a charge separation. The eukaryotic PSI reaction center is composed of at least 11 subunits. The cofactor is P700 is a chlorophyll a/chlorophyll a' dimer, A0 is one or more chlorophyll a, A1 is one or both phylloquinones and FX is a shared 4Fe-4S iron-sulfur center..

The protein localises to the plastid. Its subcellular location is the chloroplast thylakoid membrane. It carries out the reaction reduced [plastocyanin] + hnu + oxidized [2Fe-2S]-[ferredoxin] = oxidized [plastocyanin] + reduced [2Fe-2S]-[ferredoxin]. Functionally, psaA and PsaB bind P700, the primary electron donor of photosystem I (PSI), as well as the electron acceptors A0, A1 and FX. PSI is a plastocyanin/cytochrome c6-ferredoxin oxidoreductase, converting photonic excitation into a charge separation, which transfers an electron from the donor P700 chlorophyll pair to the spectroscopically characterized acceptors A0, A1, FX, FA and FB in turn. Oxidized P700 is reduced on the lumenal side of the thylakoid membrane by plastocyanin or cytochrome c6. The sequence is that of Photosystem I P700 chlorophyll a apoprotein A2 from Euglena gracilis.